Consider the following 320-residue polypeptide: 3-O-acetylpapaveroxine carboxylesterase CXE1 (320 aa).

An Involved in the stabilization of the negatively charged intermediate by the formation of the oxyanion hole motif is present at residues His-72–Gly-74. Catalysis depends on residues Ser-158, Asp-262, and His-292.

The protein belongs to the 'GDXG' lipolytic enzyme family.

It carries out the reaction 3-O-acetylpapaveroxine + H2O = narcotine hemiacetal + acetate + H(+). The protein operates within alkaloid biosynthesis. Carboxylesterase involved in the biosynthesis of the benzylisoquinoline alkaloid noscapine. Converts 3-O-acetylpapaveroxine to papaveroxine which spontaneously rearranges to narcotine hemiacetal. This Papaver somniferum (Opium poppy) protein is 3-O-acetylpapaveroxine carboxylesterase CXE1.